The sequence spans 324 residues: Glutaminase 2 (324 aa).

The substrate site is built by serine 75, asparagine 127, glutamate 171, asparagine 178, tyrosine 202, tyrosine 254, and valine 272.

The protein belongs to the glutaminase family. As to quaternary structure, homotetramer.

It catalyses the reaction L-glutamine + H2O = L-glutamate + NH4(+). The chain is Glutaminase 2 from Halalkalibacterium halodurans (strain ATCC BAA-125 / DSM 18197 / FERM 7344 / JCM 9153 / C-125) (Bacillus halodurans).